Here is a 38-residue protein sequence, read N- to C-terminus: MKVLASVKRICRNCKIIKRKGVVRVICSSDPRHKQRQG.

The protein belongs to the bacterial ribosomal protein bL36 family.

The polypeptide is Large ribosomal subunit protein bL36 (Ralstonia nicotianae (strain ATCC BAA-1114 / GMI1000) (Ralstonia solanacearum)).